The following is a 684-amino-acid chain: 77 kDa membrane protein (684 aa).

The N-terminal stretch at Met1 to Ala30 is a signal peptide. 6 MAP repeats span residues Gly45 to Lys154, Asp156 to Ala265, Lys266 to Arg374, Tyr375 to Lys474, Ala475 to Asn584, and Ser586 to Phe684.

Its subcellular location is the cell membrane. Its function is as follows. Binds various plasma and ECM-proteins. This chain is 77 kDa membrane protein, found in Staphylococcus aureus (strain COL).